The following is a 205-amino-acid chain: Holliday junction branch migration complex subunit RuvA (205 aa).

The interval 1-64 (MIGKLKGTID…EDQLKLFGFL (64 aa)) is domain I. Residues 65–143 (SALEREWFRL…AFSGEMAPSI (79 aa)) form a domain II region. The interval 144–153 (GLKQELGEGV) is flexible linker. The interval 153-205 (VAAAPVADAVSALTNLGYSRDQAANAVAAALKNGGEGGDSAKLIRLGLKELSR) is domain III.

The protein belongs to the RuvA family. In terms of assembly, homotetramer. Forms an RuvA(8)-RuvB(12)-Holliday junction (HJ) complex. HJ DNA is sandwiched between 2 RuvA tetramers; dsDNA enters through RuvA and exits via RuvB. An RuvB hexamer assembles on each DNA strand where it exits the tetramer. Each RuvB hexamer is contacted by two RuvA subunits (via domain III) on 2 adjacent RuvB subunits; this complex drives branch migration. In the full resolvosome a probable DNA-RuvA(4)-RuvB(12)-RuvC(2) complex forms which resolves the HJ.

It localises to the cytoplasm. Its function is as follows. The RuvA-RuvB-RuvC complex processes Holliday junction (HJ) DNA during genetic recombination and DNA repair, while the RuvA-RuvB complex plays an important role in the rescue of blocked DNA replication forks via replication fork reversal (RFR). RuvA specifically binds to HJ cruciform DNA, conferring on it an open structure. The RuvB hexamer acts as an ATP-dependent pump, pulling dsDNA into and through the RuvAB complex. HJ branch migration allows RuvC to scan DNA until it finds its consensus sequence, where it cleaves and resolves the cruciform DNA. The chain is Holliday junction branch migration complex subunit RuvA from Rhizobium meliloti (strain 1021) (Ensifer meliloti).